The following is a 540-amino-acid chain: BTB/POZ domain-containing protein 6-A (540 aa).

The region spanning 138–208 (ADVHFIVGPP…MYSDEIELAP (71 aa)) is the BTB domain.

Interacts with cul3. Interacts (via BTB domain) with zbtb16/plzf. Expressed in the developing central nervous system.

It is found in the cytoplasm. Its subcellular location is the nucleus. Its function is as follows. Adapter protein for the cul3 E3 ubiquitin-protein ligase complex. Promotes the export of zbtb16/plzf from the nucleus to the cytoplasm and targets zbtb16/plzf for ubiquitination and degradation. Up-regulates neurog1 expression and antagonizes zbtb16/plzf, to promote neurogenesis. In Danio rerio (Zebrafish), this protein is BTB/POZ domain-containing protein 6-A (btbd6a).